Reading from the N-terminus, the 197-residue chain is UPF0319 protein VP0761 (197 aa).

A signal peptide spans 1–20; the sequence is MKKTTTLLGICAILSAPAFA.

It belongs to the UPF0319 family.

The protein is UPF0319 protein VP0761 of Vibrio parahaemolyticus serotype O3:K6 (strain RIMD 2210633).